A 465-amino-acid chain; its full sequence is Glycine--tRNA ligase (465 aa).

Residues Arg-98 and Glu-174 each coordinate substrate. ATP contacts are provided by residues Arg-206–Glu-208, Phe-216–Phe-221, Glu-290–Leu-291, and Gly-334–Arg-337. Position 221-225 (Phe-221–Glu-225) interacts with substrate. Residue Glu-330–Gly-334 participates in substrate binding.

The protein belongs to the class-II aminoacyl-tRNA synthetase family. In terms of assembly, homodimer.

The protein localises to the cytoplasm. It catalyses the reaction tRNA(Gly) + glycine + ATP = glycyl-tRNA(Gly) + AMP + diphosphate. Functionally, catalyzes the attachment of glycine to tRNA(Gly). This is Glycine--tRNA ligase from Agathobacter rectalis (strain ATCC 33656 / DSM 3377 / JCM 17463 / KCTC 5835 / VPI 0990) (Eubacterium rectale).